The sequence spans 596 residues: Ran GTPase-activating protein (596 aa).

6 LRR repeats span residues 44–71 (QTTVHYLNLDGNTLGVEAAKAIGEGLKR), 107–134 (GAKLTVLDLSDNALGPNGMRGLEELLRS), 137–164 (CYSLQELLLCNCGLGPEGGSMLSRALID), 203–230 (LKTFEEIVLEQNSIYIEGVEALAESFKH), 231–258 (NPHLRVLNMNDNTLKSEGAEKIAEALPF), and 259–286 (LPLLREMSFGDCLIKTNGAYHFGEALER). A disordered region spans residues 355–418 (HQEEEDLEDE…EYSNVAEETA (64 aa)). The span at 387–410 (TTEEADEDSEGDEDDEEDEGDEEY) shows a compositional bias: acidic residues. Residues threonine 433 and threonine 434 each carry the phosphothreonine modification. Phosphoserine is present on serine 436.

The protein belongs to the RNA1 family. Forms a complex with Nup358/RanBP2, sbr/Nxf1 and Nxt1. Associates with the nuclear pore complex via its interaction with Nup358/RanBP2. As to expression, both full-length and truncated protein are expressed in testis (at protein level). Expressed in oocytes and nurse cells (at protein level).

Its subcellular location is the cytoplasm. The protein resides in the nucleus membrane. Functionally, GTPase activator for the nuclear Ras-related regulatory protein Ran, converting it to the putatively inactive GDP-bound state. Trans-acting factor necessary for meiotic distortion. Distortion is only seen in individuals that carry the RanGAP tandem duplication and express a RanGAP truncated protein. Binding of truncated RanGAP product to the Responder(RSP) locus initiates events that lead to sperm dysfunction. During oogenesis, plays a role in the biogenesis of annulate lamellae containing nuclear pore complex components. This Drosophila melanogaster (Fruit fly) protein is Ran GTPase-activating protein (RanGAP).